The following is a 911-amino-acid chain: Protein translocase subunit SecA (911 aa).

ATP is bound by residues Q87, 105-109, and D512; that span reads GEGKT. A disordered region spans residues 865 to 892; sequence AAEQDGAEEGAVATATAPVRSENKVGRN. Residues 873 to 883 show a composition bias toward low complexity; sequence EGAVATATAPV. Residues C895, C897, C906, and H907 each contribute to the Zn(2+) site.

Belongs to the SecA family. Monomer and homodimer. Part of the essential Sec protein translocation apparatus which comprises SecA, SecYEG and auxiliary proteins SecDF-YajC and YidC. It depends on Zn(2+) as a cofactor.

The protein resides in the cell inner membrane. It is found in the cytoplasm. The enzyme catalyses ATP + H2O + cellular proteinSide 1 = ADP + phosphate + cellular proteinSide 2.. Its function is as follows. Part of the Sec protein translocase complex. Interacts with the SecYEG preprotein conducting channel. Has a central role in coupling the hydrolysis of ATP to the transfer of proteins into and across the cell membrane, serving both as a receptor for the preprotein-SecB complex and as an ATP-driven molecular motor driving the stepwise translocation of polypeptide chains across the membrane. This is Protein translocase subunit SecA from Ectopseudomonas mendocina (strain ymp) (Pseudomonas mendocina).